The following is a 313-amino-acid chain: Desiccation-related protein PCC13-62 (313 aa).

A signal peptide spans 1-26 (MAQQPTFASAALVSFFLALICSCSYA).

The polypeptide is Desiccation-related protein PCC13-62 (Craterostigma plantagineum (Blue gem)).